A 355-amino-acid polypeptide reads, in one-letter code: Phosphoribosylformylglycinamidine cyclo-ligase (355 aa).

This sequence belongs to the AIR synthase family.

The protein localises to the cytoplasm. It catalyses the reaction 2-formamido-N(1)-(5-O-phospho-beta-D-ribosyl)acetamidine + ATP = 5-amino-1-(5-phospho-beta-D-ribosyl)imidazole + ADP + phosphate + H(+). Its pathway is purine metabolism; IMP biosynthesis via de novo pathway; 5-amino-1-(5-phospho-D-ribosyl)imidazole from N(2)-formyl-N(1)-(5-phospho-D-ribosyl)glycinamide: step 2/2. The protein is Phosphoribosylformylglycinamidine cyclo-ligase of Paraburkholderia xenovorans (strain LB400).